Here is a 286-residue protein sequence, read N- to C-terminus: tRNA (guanine-N(7)-)-methyltransferase (286 aa).

The interval 1-21 (MTNPESTAIDPVAAMGTDHTE) is disordered. S-adenosyl-L-methionine contacts are provided by Glu91, Glu116, Asn143, and Asp165. Asp165 is a catalytic residue. Residues Lys169, Asp201, and 262–265 (TNFE) contribute to the substrate site.

Belongs to the class I-like SAM-binding methyltransferase superfamily. TrmB family.

It catalyses the reaction guanosine(46) in tRNA + S-adenosyl-L-methionine = N(7)-methylguanosine(46) in tRNA + S-adenosyl-L-homocysteine. It participates in tRNA modification; N(7)-methylguanine-tRNA biosynthesis. Its function is as follows. Catalyzes the formation of N(7)-methylguanine at position 46 (m7G46) in tRNA. The polypeptide is tRNA (guanine-N(7)-)-methyltransferase (Bifidobacterium longum (strain NCC 2705)).